The following is a 1036-amino-acid chain: MFGRSRSWVGGGHSKSSRNIHSLDHLKYLYHVLTKNTTVTEQNRNLLVETIRSITEILIWGDQNDSSVFDFFLEKNMFVFFLNILRQKSGRYVCVQLLQTLNILFENISHETSLYYLLSNNYVNSIIVHKFDFSDEEIMAYYISFLKTLSLKLNNHTVHFFYNEHTNDFALYTEAIKFFNHPESMVRIAVRTITLNVYKVSLDNQAMLHYIRDKTAVPYFSNLVWFIGSHVIELDNCVQTDEEHRNRGKLSDLVAEHLDHLHYLNDILIINCEFLNDVLTDHLLNRLFLPLYVYSLENPDKGGERPKISLPVSLYLLSQVFLIIHHAPLVNSLAEVILNGDLSETYTKPAQDVPRSSAKPSIRCFIKPTETLERSLEMNKHKGKKRMQKRPNYKNVGEEEDEERGSAEDAQEDAEKTKEIEMVIMKLGKLSEVAAAGTSVQEQNTTDEEKSAATNSENAQWSRPFLDMVYHALDSPDDDYHALFVLCLLYAMSHNKGMDPEKLKRIQLPVPSEAEKTTYNHLLAERLIRIMNNAAQPDGRIRLATLELSCLLLKQQVLTSSGCVIKDVHLACLEGAREESVHLVRHFYKGEEIFLDMFEDEYRSMTIKPMNVEYLMMDASILLPPTGTPLTGIDFVKRLPCGDVEKTRRAIRVFFMLRSLSLQLRGEPETQLPLTREEDLIKTDDVLDLNNSDLIACTVITKDGGMVQRFLAVDIYQMSLVEPDVSRLGWGVVKFAGLLQDMQVTGVEDDSRALNITIHKPASSPHSKPFPILQATFVFSDHIRCIIAKQRLAKGRIQARRMKMQRIAALLDLPIQPTTEVLGFGLCSSSSSSQHLPFRFYEQCRRGSSDPTVQRSVFASVDKVPGFAVAQCINQHSSPSLSSPSPPFASGSPGGSGSTSHCDSGGSSSAPSATQSPADAPTTPEQPQPHLDQSVIGNEMDVNSKPSKNSSARSSEGETMHLSPSLLPAQQPTISLLYEDTADTLSVESLTIVPPVDPHSLRALSGISQLPTLPAADTETPAEGAVNPEPAEPTEH.

The FPL domain occupies 51–198 (IRSITEILIW…AVRTITLNVY (148 aa)). Disordered stretches follow at residues 375–416 (SLEM…DAEK), 437–458 (GTSVQEQNTTDEEKSAATNSEN), 876–967 (HSSP…PSLL), and 1008–1036 (SQLPTLPAADTETPAEGAVNPEPAEPTEH). Over residues 381–392 (HKGKKRMQKRPN) the composition is skewed to basic residues. 3 stretches are compositionally biased toward low complexity: residues 877 to 891 (SSPSLSSPSPPFASG), 898 to 923 (STSHCDSGGSSSAPSATQSPADAPTT), and 943 to 954 (NSKPSKNSSARS).

Belongs to the CLEC16A/gop-1 family. In terms of assembly, interacts with RNF41/NRDP1. In terms of tissue distribution, ubiquitously expressed. Expressed in pancreatic islets.

It is found in the endosome membrane. The protein localises to the lysosome membrane. Functionally, regulator of mitophagy through the upstream regulation of the RNF41/NRDP1-PRKN pathway. Mitophagy is a selective form of autophagy necessary for mitochondrial quality control. The RNF41/NRDP1-PRKN pathway regulates autophagosome-lysosome fusion during late mitophagy. May protect RNF41/NRDP1 from proteasomal degradation, RNF41/NRDP1 which regulates proteasomal degradation of PRKN. Plays a key role in beta cells functions by regulating mitophagy/autophagy and mitochondrial health. The polypeptide is Protein CLEC16A (Mus musculus (Mouse)).